Reading from the N-terminus, the 270-residue chain is Phosphatidylinositol transfer protein alpha isoform (270 aa).

6 residues coordinate a 1,2-diacyl-sn-glycero-3-phospho-(1D-myo-inositol): Thr-58, Lys-60, Glu-85, Asn-89, Thr-96, and Lys-194. Lys-215 carries the N6-acetyllysine modification.

It belongs to the PtdIns transfer protein family. PI transfer class I subfamily. Post-translationally, phosphorylated by PKC in a calcium and phosphatidylserine-dependent manner.

It is found in the cytoplasm. It localises to the nucleus. The enzyme catalyses a 1,2-diacyl-sn-glycero-3-phosphocholine(in) = a 1,2-diacyl-sn-glycero-3-phosphocholine(out). The catalysed reaction is a 1,2-diacyl-sn-glycero-3-phospho-(1D-myo-inositol)(in) = a 1,2-diacyl-sn-glycero-3-phospho-(1D-myo-inositol)(out). Functionally, catalyzes the transfer of phosphatidylinositol (PI) and phosphatidylcholine (PC) between membranes. Shows a preference for PI and PC containing shorter saturated or monosaturated acyl chains at the sn-1 and sn-2 positions. Preference order for PC is C16:1 &gt; C16:0 &gt; C18:1 &gt; C18:0 &gt; C20:4 and for PI is C16:1 &gt; C16:0 &gt; C18:1 &gt; C18:0 &gt; C20:4 &gt; C20:3. The sequence is that of Phosphatidylinositol transfer protein alpha isoform (PITPNA) from Bos taurus (Bovine).